The sequence spans 131 residues: UPF0102 protein YraN (131 aa).

Polar residues predominate over residues 1 to 19 (MATVPTRSGSPRQLTTKQT). Residues 1-20 (MATVPTRSGSPRQLTTKQTG) form a disordered region.

The protein belongs to the UPF0102 family.

The sequence is that of UPF0102 protein YraN from Escherichia coli O8 (strain IAI1).